Consider the following 632-residue polypeptide: 1-deoxy-D-xylulose-5-phosphate synthase (632 aa).

Thiamine diphosphate contacts are provided by residues His-72 and 113-115 (GHA). Asp-144 contributes to the Mg(2+) binding site. Thiamine diphosphate contacts are provided by residues 145–146 (GA), Asn-174, Tyr-285, and Glu-368. Asn-174 is a Mg(2+) binding site.

Belongs to the transketolase family. DXPS subfamily. Homodimer. Requires Mg(2+) as cofactor. Thiamine diphosphate serves as cofactor.

The enzyme catalyses D-glyceraldehyde 3-phosphate + pyruvate + H(+) = 1-deoxy-D-xylulose 5-phosphate + CO2. It functions in the pathway metabolic intermediate biosynthesis; 1-deoxy-D-xylulose 5-phosphate biosynthesis; 1-deoxy-D-xylulose 5-phosphate from D-glyceraldehyde 3-phosphate and pyruvate: step 1/1. In terms of biological role, catalyzes the acyloin condensation reaction between C atoms 2 and 3 of pyruvate and glyceraldehyde 3-phosphate to yield 1-deoxy-D-xylulose-5-phosphate (DXP). The chain is 1-deoxy-D-xylulose-5-phosphate synthase from Cyanothece sp. (strain PCC 7425 / ATCC 29141).